The primary structure comprises 500 residues: MELSYQEKLTLIKLNELKKAKFDELVEKTGLDQVAVMRAVLWLQSKGLARLHEKSERIAKLTETGKKYAQIGLPEWRALKVLRKKGKVTLDDLKEVLSEDELKPIVGLLRKEGWASIRKEDGKLVLEITENGLKAEERAIDRALKLLAEKEAIPVSEIEEIIKVNDLKRRKIAEEDIVTERTVEITPEGEELANKGLELKEEVSTLTPELIKSGKWREVEFKRFNIQAPVRRIYPGKKQPYRAFLDKIRRRLIEMGFIEMTVDSLIETQFWNFDALFQPQNHPAREWTDTYQLKYPKSGYLPNKELVERVKTAHERGLAGSRGWGYVWSPERAMLLMPRAHGTALSGRQLAKGVEIPGKYFTIQRVFRPDVLDRTHLIEFNQVDGFVVGEDLNFRHLLGILKRFAVEIAGAKKVKFLPDYYPFTEPSVQMSAYHPELGWVEFGGAGIFREEMTRALGIDVPVIAWGIGIDRLAMFKLGIDDIRYLFSYDLGWLREARLVW.

Residues Thr-343, 382 to 384 (QVD), and Phe-423 contribute to the L-phenylalanine site. Glu-425 is a Mg(2+) binding site. L-phenylalanine is bound at residue Phe-448.

Belongs to the class-II aminoacyl-tRNA synthetase family. Phe-tRNA synthetase alpha subunit type 2 subfamily. In terms of assembly, tetramer of two alpha and two beta subunits. Requires Mg(2+) as cofactor.

The protein localises to the cytoplasm. The catalysed reaction is tRNA(Phe) + L-phenylalanine + ATP = L-phenylalanyl-tRNA(Phe) + AMP + diphosphate + H(+). The chain is Phenylalanine--tRNA ligase alpha subunit from Thermococcus onnurineus (strain NA1).